Consider the following 233-residue polypeptide: Favin (233 aa).

2 residues coordinate Mn(2+): glutamate 120 and aspartate 122. Ca(2+) contacts are provided by aspartate 122, phenylalanine 124, asparagine 126, and aspartate 130. Mn(2+) is bound by residues aspartate 130 and histidine 137. Residue asparagine 168 is glycosylated (N-linked (GlcNAc...) asparagine).

The protein belongs to the leguminous lectin family. In terms of assembly, heterodimer of an alpha and a beta chain.

This chain is Favin, found in Vicia faba (Broad bean).